A 200-amino-acid chain; its full sequence is 7-methyl-GTP pyrophosphatase (200 aa).

Aspartate 69 serves as the catalytic Proton acceptor.

Belongs to the Maf family. YceF subfamily. It depends on a divalent metal cation as a cofactor.

The protein localises to the cytoplasm. It carries out the reaction N(7)-methyl-GTP + H2O = N(7)-methyl-GMP + diphosphate + H(+). Its function is as follows. Nucleoside triphosphate pyrophosphatase that hydrolyzes 7-methyl-GTP (m(7)GTP). May have a dual role in cell division arrest and in preventing the incorporation of modified nucleotides into cellular nucleic acids. This chain is 7-methyl-GTP pyrophosphatase, found in Colwellia psychrerythraea (strain 34H / ATCC BAA-681) (Vibrio psychroerythus).